Consider the following 585-residue polypeptide: Parathyroid hormone/parathyroid hormone-related peptide receptor (585 aa).

Positions 1 to 26 are cleaved as a signal peptide; that stretch reads MGAPRISHSLALLLCCSVLSSVYALV. The Extracellular segment spans residues 27–185; the sequence is DADDVITKEE…REREVFDRLG (159 aa). 3 disulfides stabilise this stretch: Cys-48–Cys-114, Cys-105–Cys-145, and Cys-128–Cys-167. Residues 69 to 90 are disordered; the sequence is MSRSAKTKKEKPAEKLYSQAEE. Asn-148, Asn-158, Asn-163, and Asn-173 each carry an N-linked (GlcNAc...) asparagine glycan. A helical membrane pass occupies residues 186 to 209; the sequence is MIYTVGYSISLGSLTVAVLILGYF. Topologically, residues 210–216 are cytoplasmic; the sequence is RRLHCTR. Residues 217–236 form a helical membrane-spanning segment; it reads NYIHMHLFVSFMLRAVSIFI. Residues 237–276 lie on the Extracellular side of the membrane; that stretch reads KDAVLYSGVSTDEIERITEEELRAFTEPPPADKAGFVGCR. Residues 277 to 300 form a helical membrane-spanning segment; the sequence is VAVTVFLYFLTTNYYWILVEGLYL. Over 301-314 the chain is Cytoplasmic; sequence HSLIFMAFFSEKKY. A helical transmembrane segment spans residues 315–336; sequence LWGFTLFGWGLPAVFVAVWVTV. Residues 337–355 are Extracellular-facing; it reads RATLANTECWDLSSGNKKW. A helical membrane pass occupies residues 356 to 376; that stretch reads IIQVPILAAIVVNFILFINII. Over 377–403 the chain is Cytoplasmic; the sequence is RVLATKLRETNAGRCDTRQQYRKLLKS. Residues 404-422 traverse the membrane as a helical segment; it reads TLVLMPLFGVHYIVFMATP. Residues 423–434 are Extracellular-facing; sequence YTEVSGILWQVQ. The helical transmembrane segment at 435 to 457 threads the bilayer; the sequence is MHYEMLFNSFQGFFVAIIYCFCN. Topologically, residues 458 to 585 are cytoplasmic; it reads GEVQAEIKKS…LLEEERETVM (128 aa). The Important for interaction with G proteins motif lies at 468–471; that stretch reads WSRW. A disordered region spans residues 531-585; the sequence is PGYVKHGSISENSLPSSGPEPGTKDDGYLNGSGLYEPMVGEQPPPLLEEERETVM.

The protein belongs to the G-protein coupled receptor 2 family. In terms of assembly, homodimer in the absence of bound ligand. Peptide hormone binding leads to dissociation of the homodimer. N-glycosylated.

It localises to the cell membrane. Its function is as follows. G-protein-coupled receptor for parathyroid hormone (PTH) and for parathyroid hormone-related peptide (PTHLH). Ligand binding causes a conformation change that triggers signaling via guanine nucleotide-binding proteins (G proteins) and modulates the activity of downstream effectors, such as adenylate cyclase (cAMP). PTH1R is coupled to G(s) G alpha proteins and mediates activation of adenylate cyclase activity. PTHLH dissociates from PTH1R more rapidly than PTH; as consequence, the cAMP response induced by PTHLH decays faster than the response induced by PTH. The chain is Parathyroid hormone/parathyroid hormone-related peptide receptor (PTH1R) from Didelphis virginiana (North American opossum).